The following is a 116-amino-acid chain: Flagellar transcriptional regulator FlhD (116 aa).

This sequence belongs to the FlhD family. As to quaternary structure, homodimer; disulfide-linked. Forms a heterohexamer composed of two FlhC and four FlhD subunits. Each FlhC binds a FlhD dimer, forming a heterotrimer, and a hexamer assembles by dimerization of two heterotrimers.

It is found in the cytoplasm. Its function is as follows. Functions in complex with FlhC as a master transcriptional regulator that regulates transcription of several flagellar and non-flagellar operons by binding to their promoter region. Activates expression of class 2 flagellar genes, including fliA, which is a flagellum-specific sigma factor that turns on the class 3 genes. Also regulates genes whose products function in a variety of physiological pathways. The sequence is that of Flagellar transcriptional regulator FlhD from Salmonella arizonae (strain ATCC BAA-731 / CDC346-86 / RSK2980).